A 340-amino-acid polypeptide reads, in one-letter code: Lipopolysaccharide core biosynthesis glycosyltransferase LpsE (340 aa).

The protein belongs to the glycosyltransferase group 1 family. Glycosyltransferase 4 subfamily.

It functions in the pathway bacterial outer membrane biogenesis; LPS core biosynthesis. This chain is Lipopolysaccharide core biosynthesis glycosyltransferase LpsE (lpsE), found in Rhizobium meliloti (strain 1021) (Ensifer meliloti).